The sequence spans 201 residues: Guanylate kinase (201 aa).

Positions 2–180 constitute a Guanylate kinase-like domain; the sequence is SCLFVISAPS…AARDVASIVQ (179 aa). 9-16 contributes to the ATP binding site; sequence APSGAGKT.

Belongs to the guanylate kinase family.

The protein localises to the cytoplasm. The enzyme catalyses GMP + ATP = GDP + ADP. Essential for recycling GMP and indirectly, cGMP. This chain is Guanylate kinase, found in Nitrosomonas europaea (strain ATCC 19718 / CIP 103999 / KCTC 2705 / NBRC 14298).